Here is a 310-residue protein sequence, read N- to C-terminus: Malate dehydrogenase (310 aa).

NAD(+) contacts are provided by residues 7 to 12 (GAGNVG) and aspartate 32. 2 residues coordinate substrate: arginine 81 and arginine 87. NAD(+) contacts are provided by residues asparagine 94 and 117 to 119 (VSN). Residues asparagine 119 and arginine 150 each coordinate substrate. Residue histidine 174 is the Proton acceptor of the active site.

Belongs to the LDH/MDH superfamily. MDH type 3 family.

It carries out the reaction (S)-malate + NAD(+) = oxaloacetate + NADH + H(+). Catalyzes the reversible oxidation of malate to oxaloacetate. In Chloroherpeton thalassium (strain ATCC 35110 / GB-78), this protein is Malate dehydrogenase.